Reading from the N-terminus, the 88-residue chain is MANKLTAVIVVALAVAFMVNLDYANCSPAIASSYDAMEICIENCAQCKKMFGPWFEGSLCAESCIKARGKDIPECESFASISPFLNKL.

A signal peptide spans 1-26 (MANKLTAVIVVALAVAFMVNLDYANC). 3 cysteine pairs are disulfide-bonded: C40/C64, C44/C60, and C47/C75.

This sequence belongs to the insect eclosion hormone family.

Its subcellular location is the secreted. In terms of biological role, neuropeptide that triggers the performance of ecdysis behaviors at the end of a molt. It triggers adult behavior patterns: larval, pupal and adult ecdysis, and plasticization during the molt. This Bombyx mori (Silk moth) protein is Eclosion hormone.